We begin with the raw amino-acid sequence, 352 residues long: Ubiquitin thioesterase otulin (352 aa).

Residues 1–49 (MSRGTMPQPGAWPGASCAETPAREAGAAARDGGKVTAGAQPRAATRCPA) form a disordered region. Low complexity predominate over residues 18–30 (AETPAREAGAAAR). Residues 49 to 73 (AEHEEDMYRAADEIEKEKELLIHER) adopt a coiled-coil conformation. A PIM motif motif is present at residues 52-57 (EEDMYR). The residue at position 56 (Y56) is a Phosphotyrosine. 2 linear diubiquitin binding regions span residues 95–96 (EW) and 124–126 (RGD). The 229-residue stretch at 118 to 346 (TSIRRVRGDN…DRHYNIPVRV (229 aa)) folds into the OTU domain. The active site involves D126. C129 functions as the Nucleophile in the catalytic mechanism. Linear diubiquitin binding regions lie at residues 255–259 (FFSVL), 283–289 (TGGLEQV), and 336–338 (DDR). H339 is an active-site residue. The short motif at 349–352 (ETSV) is the PDZ-binding element.

It belongs to the peptidase C65 family. Otulin subfamily. In terms of assembly, interacts (via the PUB domain) with RNF31 (via the PIM motif); the interaction is direct. Interacts with DVL2. In terms of processing, ubiquitinated. Post-translationally, acetylated. Phosphorylated. Phosphorylation at Tyr-56 prevents interaction with RNF31; dephosphorylation promotes interaction with RNF31 and the LUBAC complex.

Its subcellular location is the cytoplasm. It catalyses the reaction Thiol-dependent hydrolysis of ester, thioester, amide, peptide and isopeptide bonds formed by the C-terminal Gly of ubiquitin (a 76-residue protein attached to proteins as an intracellular targeting signal).. Its function is as follows. Deubiquitinase that specifically removes linear ('Met-1'-linked) polyubiquitin chains to substrates and acts as a regulator of angiogenesis and innate immune response. Required during angiogenesis, craniofacial and neuronal development by regulating the canonical Wnt signaling together with the LUBAC complex. Acts as a negative regulator of NF-kappa-B by regulating the activity of the LUBAC complex. OTULIN function is mainly restricted to homeostasis of the LUBAC complex: acts by removing 'Met-1'-linked autoubiquitination of the LUBAC complex, thereby preventing inactivation of the LUBAC complex. Acts as a key negative regulator of inflammation by restricting spontaneous inflammation and maintaining immune homeostasis. In myeloid cell, required to prevent unwarranted secretion of cytokines leading to inflammation and autoimmunity by restricting linear polyubiquitin formation. Plays a role in innate immune response by restricting linear polyubiquitin formation on LUBAC complex in response to NOD2 stimulation, probably to limit NOD2-dependent pro-inflammatory signaling. The protein is Ubiquitin thioesterase otulin of Mus musculus (Mouse).